The primary structure comprises 345 residues: N-acetyl-gamma-glutamyl-phosphate reductase (345 aa).

Cys-149 is a catalytic residue.

The protein belongs to the NAGSA dehydrogenase family. Type 1 subfamily.

The protein localises to the cytoplasm. The enzyme catalyses N-acetyl-L-glutamate 5-semialdehyde + phosphate + NADP(+) = N-acetyl-L-glutamyl 5-phosphate + NADPH + H(+). Its pathway is amino-acid biosynthesis; L-arginine biosynthesis; N(2)-acetyl-L-ornithine from L-glutamate: step 3/4. Catalyzes the NADPH-dependent reduction of N-acetyl-5-glutamyl phosphate to yield N-acetyl-L-glutamate 5-semialdehyde. This is N-acetyl-gamma-glutamyl-phosphate reductase from Bacillus cereus (strain ATCC 10987 / NRS 248).